We begin with the raw amino-acid sequence, 64 residues long: Large ribosomal subunit protein bL35 (64 aa).

Residues 19 to 41 (SGKVKRERMNGSHNLEHKNRKRT) form a disordered region. The span at 25-35 (ERMNGSHNLEH) shows a compositional bias: basic and acidic residues.

It belongs to the bacterial ribosomal protein bL35 family.

This is Large ribosomal subunit protein bL35 from Chlorobaculum tepidum (strain ATCC 49652 / DSM 12025 / NBRC 103806 / TLS) (Chlorobium tepidum).